The following is a 119-amino-acid chain: Ribonuclease P protein component (119 aa).

The protein belongs to the RnpA family. As to quaternary structure, consists of a catalytic RNA component (M1 or rnpB) and a protein subunit.

The catalysed reaction is Endonucleolytic cleavage of RNA, removing 5'-extranucleotides from tRNA precursor.. Its function is as follows. RNaseP catalyzes the removal of the 5'-leader sequence from pre-tRNA to produce the mature 5'-terminus. It can also cleave other RNA substrates such as 4.5S RNA. The protein component plays an auxiliary but essential role in vivo by binding to the 5'-leader sequence and broadening the substrate specificity of the ribozyme. In Streptococcus pyogenes serotype M5 (strain Manfredo), this protein is Ribonuclease P protein component.